A 279-amino-acid polypeptide reads, in one-letter code: Protease HtpX homolog (279 aa).

2 consecutive transmembrane segments (helical) span residues 6 to 26 (TVALMTVLTLLLVWAGGMMGG) and 28 to 48 (GGALFALIMAAVMNLGSYWFS). Position 127 (histidine 127) interacts with Zn(2+). The active site involves glutamate 128. Histidine 131 serves as a coordination point for Zn(2+). The next 2 membrane-spanning stretches (helical) occupy residues 137–157 (ILIGSIAATIAGAISYLAHMA) and 177–197 (LGLLLLIIFAPLAAMLVQMAI). Residue glutamate 202 participates in Zn(2+) binding.

Belongs to the peptidase M48B family. It depends on Zn(2+) as a cofactor.

It is found in the cell inner membrane. The protein is Protease HtpX homolog of Syntrophotalea carbinolica (strain DSM 2380 / NBRC 103641 / GraBd1) (Pelobacter carbinolicus).